A 395-amino-acid polypeptide reads, in one-letter code: Probable alcohol dehydrogenase EutG (395 aa).

Residues D57, 116 to 120 (GSVLD), 156 to 160 (TTAGT), K178, and 197 to 201 (LTEGV) each bind NAD(+). The Fe cation site is built by D212, H216, H281, and H295. Positions 295 and 354 each coordinate NAD(+).

It belongs to the iron-containing alcohol dehydrogenase family. Fe cation serves as cofactor.

Its subcellular location is the bacterial microcompartment. The catalysed reaction is ethanol + NAD(+) = acetaldehyde + NADH + H(+). It participates in amine and polyamine degradation; ethanolamine degradation. Its function is as follows. May act on the acetaldehyde produced from the degradation of ethanolamine, producing ethanol. Active on acetaldehyde and isobutyraldehyde in vitro. In vitro works equally well with NADH or NADPH. The sequence is that of Probable alcohol dehydrogenase EutG (eutG) from Escherichia coli (strain K12).